The following is a 262-amino-acid chain: Thiazole synthase (262 aa).

Catalysis depends on K96, which acts as the Schiff-base intermediate with DXP. 1-deoxy-D-xylulose 5-phosphate-binding positions include G157, 184-185, and 206-207; these read AG and NT.

It belongs to the ThiG family. In terms of assembly, homotetramer. Forms heterodimers with either ThiH or ThiS.

It localises to the cytoplasm. It carries out the reaction [ThiS sulfur-carrier protein]-C-terminal-Gly-aminoethanethioate + 2-iminoacetate + 1-deoxy-D-xylulose 5-phosphate = [ThiS sulfur-carrier protein]-C-terminal Gly-Gly + 2-[(2R,5Z)-2-carboxy-4-methylthiazol-5(2H)-ylidene]ethyl phosphate + 2 H2O + H(+). It participates in cofactor biosynthesis; thiamine diphosphate biosynthesis. Functionally, catalyzes the rearrangement of 1-deoxy-D-xylulose 5-phosphate (DXP) to produce the thiazole phosphate moiety of thiamine. Sulfur is provided by the thiocarboxylate moiety of the carrier protein ThiS. In vitro, sulfur can be provided by H(2)S. The protein is Thiazole synthase of Legionella pneumophila (strain Lens).